The chain runs to 172 residues: ATP synthase subunit b (172 aa).

A helical transmembrane segment spans residues 27 to 47; that stretch reads LAIVIFGLYKFLPPFIGGILE.

Belongs to the ATPase B chain family. As to quaternary structure, F-type ATPases have 2 components, F(1) - the catalytic core - and F(0) - the membrane proton channel. F(1) has five subunits: alpha(3), beta(3), gamma(1), delta(1), epsilon(1). F(0) has four main subunits: a(1), b(1), b'(1) and c(10-14). The alpha and beta chains form an alternating ring which encloses part of the gamma chain. F(1) is attached to F(0) by a central stalk formed by the gamma and epsilon chains, while a peripheral stalk is formed by the delta, b and b' chains.

Its subcellular location is the cellular thylakoid membrane. F(1)F(0) ATP synthase produces ATP from ADP in the presence of a proton or sodium gradient. F-type ATPases consist of two structural domains, F(1) containing the extramembraneous catalytic core and F(0) containing the membrane proton channel, linked together by a central stalk and a peripheral stalk. During catalysis, ATP synthesis in the catalytic domain of F(1) is coupled via a rotary mechanism of the central stalk subunits to proton translocation. Functionally, component of the F(0) channel, it forms part of the peripheral stalk, linking F(1) to F(0). The polypeptide is ATP synthase subunit b (Prochlorococcus marinus (strain MIT 9313)).